We begin with the raw amino-acid sequence, 437 residues long: Lipid II isoglutaminyl synthase (glutamine-hydrolyzing) subunit MurT (437 aa).

Residues Cys202, Cys205, Cys224, and Cys226 each contribute to the Zn(2+) site. The active site involves Asp349.

The protein belongs to the MurCDEF family. MurT subfamily. As to quaternary structure, forms a heterodimer with GatD.

The enzyme catalyses beta-D-GlcNAc-(1-&gt;4)-Mur2Ac(oyl-L-Ala-gamma-D-Glu-L-Lys-D-Ala-D-Ala)-di-trans,octa-cis-undecaprenyl diphosphate + L-glutamine + ATP + H2O = beta-D-GlcNAc-(1-&gt;4)-Mur2Ac(oyl-L-Ala-D-isoglutaminyl-L-Lys-D-Ala-D-Ala)-di-trans,octa-cis-undecaprenyl diphosphate + L-glutamate + ADP + phosphate + H(+). The catalysed reaction is beta-D-GlcNAc-(1-&gt;4)-Mur2Ac(oyl-L-Ala-gamma-D-Glu-L-Lys-D-Ala-D-Ala)-di-trans,octa-cis-undecaprenyl diphosphate + ATP = beta-D-GlcNAc-(1-&gt;4)-Mur2Ac(oyl-L-Ala-gamma-D-O-P-Glu-L-Lys-D-Ala-D-Ala)-di-trans,octa-cis-undecaprenyl diphosphate + ADP. It catalyses the reaction beta-D-GlcNAc-(1-&gt;4)-Mur2Ac(oyl-L-Ala-gamma-D-O-P-Glu-L-Lys-D-Ala-D-Ala)-di-trans,octa-cis-undecaprenyl diphosphate + NH4(+) = beta-D-GlcNAc-(1-&gt;4)-Mur2Ac(oyl-L-Ala-D-isoglutaminyl-L-Lys-D-Ala-D-Ala)-di-trans,octa-cis-undecaprenyl diphosphate + phosphate + H(+). It functions in the pathway cell wall biogenesis; peptidoglycan biosynthesis. The lipid II isoglutaminyl synthase complex catalyzes the formation of alpha-D-isoglutamine in the cell wall lipid II stem peptide. The MurT subunit catalyzes the ATP-dependent amidation of D-glutamate residue of lipid II, converting it to an isoglutamine residue. The polypeptide is Lipid II isoglutaminyl synthase (glutamine-hydrolyzing) subunit MurT (Staphylococcus aureus (strain COL)).